Reading from the N-terminus, the 180-residue chain is Der GTPase-activating protein YihI (180 aa).

Polar residues predominate over residues 1 to 10 (MKQPARTSQV). 2 disordered regions span residues 1–102 (MKQP…PRLT) and 158–180 (DAED…RTPE). Basic and acidic residues predominate over residues 21-32 (TREEINQEARDR). The segment covering 45-54 (SRANPATVSQ) has biased composition (polar residues). Over residues 55–67 (KGDKSQSVKDPRI) the composition is skewed to basic and acidic residues. Over residues 84–93 (PANPVKAAKP) the composition is skewed to low complexity.

It belongs to the YihI family. As to quaternary structure, interacts with Der.

Functionally, a GTPase-activating protein (GAP) that modifies Der/EngA GTPase function. May play a role in ribosome biogenesis. This Erwinia tasmaniensis (strain DSM 17950 / CFBP 7177 / CIP 109463 / NCPPB 4357 / Et1/99) protein is Der GTPase-activating protein YihI.